The sequence spans 235 residues: Thrombin-like enzyme bilineobin (235 aa).

In terms of domain architecture, Peptidase S1 spans 1-227; the sequence is IIGGDECNIN…HLDWIQSIIA (227 aa). Intrachain disulfides connect C7–C141, C28–C44, C78–C234, C120–C188, C152–C167, and C178–C203. The active-site Charge relay system is the H43. 3 N-linked (GlcNAc...) asparagine glycosylation sites follow: N45, N57, and N81. The Charge relay system role is filled by D88. N-linked (GlcNAc...) asparagine glycosylation is found at N132 and N148. The active-site Charge relay system is S182. A glycan (N-linked (GlcNAc...) asparagine) is linked at N229.

The protein belongs to the peptidase S1 family. Snake venom subfamily. Monomer. Glycosylated. As to expression, expressed by the venom gland.

The protein resides in the secreted. Not inhibited by hirudin. Thrombin-like snake venom serine protease that has coagulant activity by releasing fibrinopeptides A and B from fibrinogen alpha (FGA) and beta (FGB), with a preference for beta chain. This Agkistrodon bilineatus (Cantil) protein is Thrombin-like enzyme bilineobin.